A 331-amino-acid polypeptide reads, in one-letter code: Ornithine carbamoyltransferase (331 aa).

Carbamoyl phosphate is bound by residues 55-58, Gln82, Arg106, and 133-136; these read STRT and HPTQ. L-ornithine-binding positions include Asn166, Asp230, and 234-235; that span reads SM. Carbamoyl phosphate contacts are provided by residues 272–273 and Arg317; that span reads CL.

The protein belongs to the aspartate/ornithine carbamoyltransferase superfamily. OTCase family.

Its subcellular location is the cytoplasm. The catalysed reaction is carbamoyl phosphate + L-ornithine = L-citrulline + phosphate + H(+). Its pathway is amino-acid biosynthesis; L-arginine biosynthesis; L-arginine from L-ornithine and carbamoyl phosphate: step 1/3. Functionally, reversibly catalyzes the transfer of the carbamoyl group from carbamoyl phosphate (CP) to the N(epsilon) atom of ornithine (ORN) to produce L-citrulline. This is Ornithine carbamoyltransferase (argF) from Neisseria gonorrhoeae.